We begin with the raw amino-acid sequence, 31 residues long: Conotoxin (31 aa).

This sequence belongs to the conotoxin S superfamily. Contains 5 disulfide bonds. As to expression, expressed by the venom duct.

It localises to the secreted. In Conus striatus (Striated cone), this protein is Conotoxin.